A 246-amino-acid chain; its full sequence is Probable H/ACA ribonucleoprotein complex subunit 1-like protein (246 aa).

2 disordered regions span residues 1–61 (MSFR…GGYD) and 155–246 (PQVG…TKFD). 2 RGG-box regions span residues 4–59 (RGGR…GRGG) and 161–223 (RGRG…RGRG). Positions 168 to 180 (RGGDRGRGGDRGR) are enriched in basic and acidic residues. The span at 181 to 221 (GGFGGRGGGGGGFRGGSRGGFGGGDRGGFRGGRGGDFGGRG) shows a compositional bias: gly residues.

The protein belongs to the GAR1 family. As to quaternary structure, component of the small nucleolar ribonucleoprotein particle containing H/ACA-type snoRNAs (H/ACA snoRNPs).

The protein localises to the nucleus. Its subcellular location is the nucleolus. Functionally, required for ribosome biogenesis. Part of a complex which catalyzes pseudouridylation of rRNA. This involves the isomerization of uridine such that the ribose is subsequently attached to C5, instead of the normal N1. Pseudouridine ('psi') residues may serve to stabilize the conformation of rRNAs. The protein is Probable H/ACA ribonucleoprotein complex subunit 1-like protein of Caenorhabditis briggsae.